The sequence spans 428 residues: Histidine--tRNA ligase (428 aa).

This sequence belongs to the class-II aminoacyl-tRNA synthetase family. As to quaternary structure, homodimer.

Its subcellular location is the cytoplasm. The catalysed reaction is tRNA(His) + L-histidine + ATP = L-histidyl-tRNA(His) + AMP + diphosphate + H(+). The protein is Histidine--tRNA ligase of Lactobacillus delbrueckii subsp. bulgaricus (strain ATCC BAA-365 / Lb-18).